The primary structure comprises 265 residues: 2-Cys peroxiredoxin BAS1, chloroplastic (265 aa).

A chloroplast-targeting transit peptide spans 1–65; that stretch reads MACVASSTTL…SSTSRRSFAV (65 aa). The 160-residue stretch at 73-232 folds into the Thioredoxin domain; the sequence is PLVGNKAPDF…TMRTLQALQY (160 aa). The Cysteine sulfenic acid (-SOH) intermediate role is filled by Cys119.

Belongs to the peroxiredoxin family. AhpC/Prx1 subfamily. As to quaternary structure, homodimer; disulfide-linked, upon oxidation.

It localises to the plastid. It is found in the chloroplast. It carries out the reaction a hydroperoxide + [thioredoxin]-dithiol = an alcohol + [thioredoxin]-disulfide + H2O. Thiol-specific peroxidase that catalyzes the reduction of hydrogen peroxide and organic hydroperoxides to water and alcohols, respectively. Plays a role in cell protection against oxidative stress by detoxifying peroxides. May be an antioxidant enzyme particularly in the developing shoot and photosynthesizing leaf. This is 2-Cys peroxiredoxin BAS1, chloroplastic (BAS1) from Spinacia oleracea (Spinach).